Here is a 277-residue protein sequence, read N- to C-terminus: Large ribosomal subunit protein uL2 (277 aa).

Disordered regions lie at residues 37–60 and 223–264; these read KNST…GHKH and VVMN…NKRT. Polar residues predominate over residues 39–49; the sequence is STAGRNNNGHI. Basic residues predominate over residues 50 to 60; sequence TTRHKGGGHKH. The segment covering 229 to 244 has biased composition (basic and acidic residues); the sequence is DHPHGGGEGRTGEARE.

It belongs to the universal ribosomal protein uL2 family. In terms of assembly, part of the 50S ribosomal subunit. Forms a bridge to the 30S subunit in the 70S ribosome.

One of the primary rRNA binding proteins. Required for association of the 30S and 50S subunits to form the 70S ribosome, for tRNA binding and peptide bond formation. It has been suggested to have peptidyltransferase activity; this is somewhat controversial. Makes several contacts with the 16S rRNA in the 70S ribosome. This Neisseria meningitidis serogroup B (strain ATCC BAA-335 / MC58) protein is Large ribosomal subunit protein uL2.